We begin with the raw amino-acid sequence, 360 residues long: GTPase Obg (360 aa).

The 156-residue stretch at 1–156 (MFVDSVEIII…KCVRLELKLI (156 aa)) folds into the Obg domain. In terms of domain architecture, OBG-type G spans 157 to 360 (ADIGLVGFPN…LKFVLLEALP (204 aa)). Residues 163 to 170 (GFPNAGKS), 188 to 192 (FTTLV), 210 to 213 (DIPG), 279 to 282 (NKCD), and 341 to 343 (SAV) each bind GTP. Mg(2+)-binding residues include serine 170 and threonine 190.

The protein belongs to the TRAFAC class OBG-HflX-like GTPase superfamily. OBG GTPase family. As to quaternary structure, monomer. Mg(2+) is required as a cofactor.

The protein localises to the cytoplasm. Functionally, an essential GTPase which binds GTP, GDP and possibly (p)ppGpp with moderate affinity, with high nucleotide exchange rates and a fairly low GTP hydrolysis rate. Plays a role in control of the cell cycle, stress response, ribosome biogenesis and in those bacteria that undergo differentiation, in morphogenesis control. This chain is GTPase Obg, found in Helicobacter pylori (strain ATCC 700392 / 26695) (Campylobacter pylori).